The sequence spans 59 residues: MDHRLLEIVACPVCKGKLTFDKDKQELVCKIDRLAYPIKEGIPVLLEPEARTVSMDEGK.

Belongs to the UPF0434 family.

The sequence is that of UPF0434 protein VS_2060 from Vibrio atlanticus (strain LGP32) (Vibrio splendidus (strain Mel32)).